A 414-amino-acid polypeptide reads, in one-letter code: uncharacterized protein (414 aa).

A signal peptide spans 1 to 16; that stretch reads MRVILLLAFLISLTEC. Residues 20–59 enclose the Myb-like 1 domain; the sequence is SEDLALYDLVEEVGVNFYEWFDIPRDASSNQVKKAYRKLT. Positions 35–99 constitute a J domain; that stretch reads NFYEWFDIPR…ELREKYDNVL (65 aa). A helical transmembrane segment spans residues 125–145; that stretch reads ILVLLFIGTIAHYLMMWAAYF. The tract at residues 211-234 is disordered; that stretch reads MTPKEVEPEEPTEEELAQQRRQQR. The span at 217 to 226 shows a compositional bias: acidic residues; that stretch reads EPEEPTEEEL. Residues 274–320 enclose the Myb-like 2 domain; the sequence is AQKQSGATWTPDELASLVRLSTEKYPAGTPNRWEQMGRVLNRSAEDV. The 56-residue stretch at 352–407 folds into the SANT domain; it reads KSEDDWSQAEQKAFETALQKYPKGTDERWERISEEIGSKTKKQVMVRFKQLAEMIR.

The protein resides in the nucleus membrane. This is an uncharacterized protein from Caenorhabditis elegans.